Here is a 318-residue protein sequence, read N- to C-terminus: NADH-ubiquinone oxidoreductase chain 1 (318 aa).

A run of 8 helical transmembrane segments spans residues I5–I25, S69–I89, L102–G122, L148–I168, I174–E194, V215–F235, L253–V273, and F293–V313.

Belongs to the complex I subunit 1 family.

The protein resides in the mitochondrion inner membrane. The enzyme catalyses a ubiquinone + NADH + 5 H(+)(in) = a ubiquinol + NAD(+) + 4 H(+)(out). Functionally, core subunit of the mitochondrial membrane respiratory chain NADH dehydrogenase (Complex I) that is believed to belong to the minimal assembly required for catalysis. Complex I functions in the transfer of electrons from NADH to the respiratory chain. The immediate electron acceptor for the enzyme is believed to be ubiquinone. The chain is NADH-ubiquinone oxidoreductase chain 1 (MT-ND1) from Myxine glutinosa (Atlantic hagfish).